A 62-amino-acid polypeptide reads, in one-letter code: Large ribosomal subunit protein bL28 (62 aa).

The protein belongs to the bacterial ribosomal protein bL28 family.

This is Large ribosomal subunit protein bL28 from Helicobacter pylori (strain Shi470).